Here is a 285-residue protein sequence, read N- to C-terminus: Extracellular metalloprotease NCU07200 (285 aa).

The N-terminal stretch at 1 to 18 (MQIKSFLLAAAAAPAALG) is a signal peptide. Histidine 197 lines the Zn(2+) pocket. Glutamate 198 is an active-site residue. Residue histidine 201 coordinates Zn(2+). Cysteine 233 and cysteine 260 are oxidised to a cystine. N-linked (GlcNAc...) asparagine glycosylation occurs at asparagine 282.

Belongs to the peptidase M43B family.

The protein localises to the secreted. Secreted metalloproteinase that allows assimilation of proteinaceous substrates. This Neurospora crassa (strain ATCC 24698 / 74-OR23-1A / CBS 708.71 / DSM 1257 / FGSC 987) protein is Extracellular metalloprotease NCU07200.